The following is a 435-amino-acid chain: MEIRCKVLVCHIILLHSATVYLYSVPASQQNPESVVVSVTNISTHVGDQGFLTCESYRMVWTQDNLMDRQRVVHWDLYNSQGVYRGERLLDMFSAGEQRIYKDYNQRRISVSESAFQDGNFSLVIKDVSMIDQGLYSCNLHHHYCHLDETVRVQLNITKSERKVKIYWDGEKIVIVALVHSTVLLPCENHDHMWTDRHREEDQQVVHWDRQAPGIPHDRADRLIDMYASGERRAYGSLFLRRKMNVSNSAFSQGDFTLFIPYLTRGDEGTYSCHLHHHYCGLHERRIFYLSVSDRPKTEEPSKTNSDSAPAIDSNVVQENKVINVTIQESRLHFFQQLGYILATLLLFILLLTAVILITRKHQKRGYAYNLNKPQGKEVNMQEICLRPPDLIQYKKEELRIDYKNNILKERAEMDRVFAPKNIDLDLELRKEYCK.

A signal peptide spans 1-22 (MEIRCKVLVCHIILLHSATVYL). Residues 23–337 (YSVPASQQNP…QESRLHFFQQ (315 aa)) lie on the Extracellular side of the membrane. 2 consecutive Ig-like V-type domains span residues 32 to 158 (PESV…LNIT) and 156 to 293 (NITK…LSVS). N-linked (GlcNAc...) asparagine glycans are attached at residues N41, N120, N156, N245, and N324. C54 and C138 are joined by a disulfide. Residues C187 and C273 are joined by a disulfide bond. Residues 338–358 (LGYILATLLLFILLLTAVILI) form a helical membrane-spanning segment. Residues 359 to 435 (TRKHQKRGYA…DLELRKEYCK (77 aa)) are Cytoplasmic-facing.

In terms of assembly, homodimer in cis. Does not appear to form trans-homodimers.

The protein resides in the cell membrane. Transmembrane protein which can modulate activity of various signaling pathways, probably via binding to integrin ITGAV:ITGB3. Mediates heterophilic cell-cell interactions in vitro. The protein is Matrix remodeling-associated protein 8 (mxra8) of Xenopus laevis (African clawed frog).